The following is a 596-amino-acid chain: Putative terpene synthase 2, chloroplastic (596 aa).

A chloroplast-targeting transit peptide spans Met1–Ser46. The Mn(2+) site is built by Asp349 and Asp353. The DDXXD motif signature appears at Asp349–Asp353. Homodimerization stretches follow at residues Tyr355 to Leu361 and Glu427 to Pro464. 2 residues coordinate Mn(2+): Asp493 and Glu501.

This sequence belongs to the terpene synthase family. In terms of assembly, homodimer. Mn(2+) is required as a cofactor. The cofactor is Mg(2+).

The protein localises to the plastid. It is found in the chloroplast. The protein operates within secondary metabolite biosynthesis; terpenoid biosynthesis. Putative monoterpene synthase inactive on geranyl diphosphate (GPP). The chain is Putative terpene synthase 2, chloroplastic from Thymus vulgaris (Thyme).